A 274-amino-acid chain; its full sequence is (R)-stereoselective amidase (274 aa).

The 234-residue stretch at 1-234 (MKIELVQLAG…EVRHVVELDL (234 aa)) folds into the CN hydrolase domain. Catalysis depends on Glu-40, which acts as the Proton acceptor. Lys-108 functions as the Proton donor in the catalytic mechanism. Cys-140 functions as the Nucleophile in the catalytic mechanism.

In terms of assembly, monomer.

The enzyme catalyses (R)-piperazine-2-carboxamide + H2O = (R)-piperazine-2-carboxylate + NH4(+). The catalysed reaction is beta-alaninamide + H2O = beta-alanine + NH4(+). Completely inhibited by p-chloromercuribenzoate, N-ethylmaleimide, MnSO(4), MnCl(2), CoCl(2), NiCl(2), CuSO(4), CuCl(2), ZnSO(4), ZnCl(2), AgNO(3), CdCl(2), HgCl(2) and PbCl(2). Partially inhibited by FeCl(3) and Fe(NH(4))(2)(SO(4))(2). Slightly enhanced by dithiothreitol. Unaffected by LiBr, H(2)BO(3), NaCl, MgSO(4), MgCl(2), AlCl(3), KCl, CaCl(2), CrCl(3), RbCl, Na(2)MoO(4), (NH(4))(6)Mo(7)O(24), CsCl and BaCl(2). Unaffected by the chelating agents o-phenanthroline, 8-hydroxyquinoline, enthylenediaminetetraacetic acid and alpha,alpha'-dipyridyl. Not inhibited by the carbonyl reagents hydroxylamine, phenylhydrazine, hydrazine, D,L-penicillamine and D-cycloserine. Not affected by the serine protease inhibitor phenylmethanesulfonyl fluoride, the serine/cysteine protease inhibitor leupeptine or the aspartic protease inhibitor pepstatin. Its function is as follows. Hydrolyzes (R)-piperazine-2-carboxamide and (R)-piperazine-2-tert-butylcarboxamide with strict R-stereoselectivity. Also active towards beta-alaninamide, piperidine-3-carboxmide, D-glutaminamide and slightly active towards L-glutaminamide and piperidine-4-carboxamide. This Pseudomonas sp protein is (R)-stereoselective amidase.